The sequence spans 91 residues: Small ribosomal subunit protein bS16 (91 aa).

It belongs to the bacterial ribosomal protein bS16 family.

The sequence is that of Small ribosomal subunit protein bS16 from Exiguobacterium sp. (strain ATCC BAA-1283 / AT1b).